Reading from the N-terminus, the 543-residue chain is MSSFSYEPYYSTSYKRRYVETPRVHISSVRSGYSTARSAYSSYSAPVSSSLSVRRSYSSSSGSLMPSLENLDLSQVAAISNDLKSIRTQEKAQLQDLNDRFASFIERVHELEQQNKVLEAELLVLRQKHSEPSRFRALYEQEIRDLRLAAEDATNEKQALQGEREGLEETLRNLQARYEEEVLSREDAEGRLMEARKGADEAALARAELEKRIDSLMDEISFLKKVHEEEIAELQAQIQYAQISVEMDVTKPDLSAALKDIRAQYEKLAAKNMQNAEEWFKSRFTVLTESAAKNTDAVRAAKDEVSESRRLLKAKTLEIEACRGMNEALEKQLQELEDKQNADISAMQDTINKLENELRTTKSEMARYLKEYQDLLNVKMALDIEIAAYRKLLEGEETRLSFTSVGSITSGYSQSSQVFGRSAYGGLQTSSYLMSTRSFPSYYTSHVQEEQIEVEETIEAAKAEEAKDEPPSEGEAEEEEKDKEEAEEEEAAEEEEAAKEESEEAKEEEEGGEGEEGEETKEAEEEEKKVEGAGEEQAAKKKD.

Ser2 is modified (N-acetylserine). The tract at residues 2 to 92 (SSFSYEPYYS…LKSIRTQEKA (91 aa)) is head. O-linked (GlcNAc) threonine glycosylation is present at Thr21. The residue at position 23 (Arg23) is an Asymmetric dimethylarginine; alternate. An Omega-N-methylarginine; alternate modification is found at Arg23. The O-linked (GlcNAc) serine glycan is linked to Ser27. Residue Arg30 is modified to Omega-N-methylarginine. Position 43 is a phosphotyrosine (Tyr43). 3 positions are modified to phosphoserine: Ser56, Ser67, and Ser103. In terms of domain architecture, IF rod spans 90-400 (EKAQLQDLND…KLLEGEETRL (311 aa)). Residues 93 to 124 (QLQDLNDRFASFIERVHELEQQNKVLEAELLV) form a coil 1A region. Positions 125–137 (LRQKHSEPSRFRA) are linker 1. The segment at 138–234 (LYEQEIRDLR…KVHEEEIAEL (97 aa)) is coil 1B. The tract at residues 235–252 (QAQIQYAQISVEMDVTKP) is linker 12. Residues 253–271 (DLSAALKDIRAQYEKLAAK) form a coil 2A region. The tract at residues 272–280 (NMQNAEEWF) is linker 2. The coil 2B stretch occupies residues 281–396 (KSRFTVLTES…AAYRKLLEGE (116 aa)). The tract at residues 381 to 391 (ALDIEIAAYRK) is epitope; recognized by IF-specific monoclonal antibody. Residues 397 to 443 (ETRLSFTSVGSITSGYSQSSQVFGRSAYGGLQTSSYLMSTRSFPSYY) form a tail, subdomain A region. The segment at 397–543 (ETRLSFTSVG…GEEQAAKKKD (147 aa)) is tail. The tract at residues 444-543 (TSHVQEEQIE…GEEQAAKKKD (100 aa)) is tail, subdomain B (acidic). Residues 462-543 (KAEEAKDEPP…GEEQAAKKKD (82 aa)) are disordered. Over residues 471-525 (PSEGEAEEEEKDKEEAEEEEAAEEEEAAKEESEEAKEEEEGGEGEEGEETKEAEE) the composition is skewed to acidic residues. 2 positions are modified to phosphoserine: Ser472 and Ser502. Position 520 is a phosphothreonine (Thr520). Residues 526–543 (EEKKVEGAGEEQAAKKKD) are compositionally biased toward basic and acidic residues.

It belongs to the intermediate filament family. Forms homodimers (in vitro). Forms heterodimers with NEFH or NEFM; which can further hetero-oligomerize (in vitro). Forms heterodimers with INA (in vitro). Interacts with ARHGEF28. Interacts with TRIM2. In terms of processing, O-glycosylated. Phosphorylated in the head and rod regions by the PKC kinase PKN1, leading to the inhibition of polymerization. Post-translationally, ubiquitinated in the presence of TRIM2 and UBE2D1.

The protein localises to the cell projection. It is found in the axon. The protein resides in the cytoplasm. It localises to the cytoskeleton. Its function is as follows. Neurofilaments usually contain three intermediate filament proteins: NEFL, NEFM, and NEFH which are involved in the maintenance of neuronal caliber. May additionally cooperate with the neuronal intermediate filament proteins PRPH and INA to form neuronal filamentous networks. The chain is Neurofilament light polypeptide (NEFL) from Homo sapiens (Human).